Reading from the N-terminus, the 202-residue chain is LexA repressor (202 aa).

Residues 28-48 (RAEIAQQLGFRSPNAAEEHLK) constitute a DNA-binding region (H-T-H motif). Active-site for autocatalytic cleavage activity residues include Ser-119 and Lys-156.

It belongs to the peptidase S24 family. As to quaternary structure, homodimer.

The enzyme catalyses Hydrolysis of Ala-|-Gly bond in repressor LexA.. Its function is as follows. Represses a number of genes involved in the response to DNA damage (SOS response), including recA and lexA. In the presence of single-stranded DNA, RecA interacts with LexA causing an autocatalytic cleavage which disrupts the DNA-binding part of LexA, leading to derepression of the SOS regulon and eventually DNA repair. In Pectobacterium atrosepticum (strain SCRI 1043 / ATCC BAA-672) (Erwinia carotovora subsp. atroseptica), this protein is LexA repressor.